The primary structure comprises 360 residues: Phospho-N-acetylmuramoyl-pentapeptide-transferase (360 aa).

Over 1–25 (MLVWLAEHLVKYYSGFNVFSYLTFR) the chain is Periplasmic. A helical transmembrane segment spans residues 26–46 (AIVSLLTALFISLWMGPRMIA). Residues 47–71 (RLQKLSFGQVVRNDGPESHFSKRGT) lie on the Cytoplasmic side of the membrane. A helical transmembrane segment spans residues 72-92 (PTMGGIMILTAIVISVLLWAY). Position 93 (Pro93) is a topological domain, periplasmic. The helical transmembrane segment at 94-114 (SNPYVWCVLVVLIGYGIIGFV) threads the bilayer. At 115–131 (DDYHKVVRKDTKGLIAR) the chain is on the cytoplasmic side. A helical transmembrane segment spans residues 132 to 152 (WKYFWMSVIALGVAFALYLVG). Residues 153-167 (KDTPATQLVVPFFKD) lie on the Periplasmic side of the membrane. A helical membrane pass occupies residues 168–188 (VMPQLGLFYILLSYFVIVGTG). Topologically, residues 189–198 (NAVNLTDGLD) are cytoplasmic. A helical membrane pass occupies residues 199 to 219 (GLAIMPTVFVAAGFALVAWAT). Over 220–235 (GNMNFANYLHIPYLRY) the chain is Periplasmic. Residues 236–256 (AGELVIVCTAIVGAGLGFLWF) traverse the membrane as a helical segment. The Cytoplasmic portion of the chain corresponds to 257–262 (NTYPAQ). The helical transmembrane segment at 263 to 283 (VFMGDVGSLALGGALGIIAVL) threads the bilayer. The Periplasmic portion of the chain corresponds to 284–287 (LRQE). Residues 288–308 (FLLVIMGGVFVVETLSVILQV) traverse the membrane as a helical segment. Over 309-337 (GSFKLRGQRIFRMAPIHHHYELKGWPEPR) the chain is Cytoplasmic. Residues 338-358 (VIVRFWIISLMLVLIGLATLK) traverse the membrane as a helical segment. Residues 359-360 (VR) are Periplasmic-facing.

This sequence belongs to the glycosyltransferase 4 family. MraY subfamily. Requires Mg(2+) as cofactor.

It is found in the cell inner membrane. The catalysed reaction is UDP-N-acetyl-alpha-D-muramoyl-L-alanyl-gamma-D-glutamyl-meso-2,6-diaminopimeloyl-D-alanyl-D-alanine + di-trans,octa-cis-undecaprenyl phosphate = di-trans,octa-cis-undecaprenyl diphospho-N-acetyl-alpha-D-muramoyl-L-alanyl-D-glutamyl-meso-2,6-diaminopimeloyl-D-alanyl-D-alanine + UMP. Its pathway is cell wall biogenesis; peptidoglycan biosynthesis. In terms of biological role, catalyzes the initial step of the lipid cycle reactions in the biosynthesis of the cell wall peptidoglycan: transfers peptidoglycan precursor phospho-MurNAc-pentapeptide from UDP-MurNAc-pentapeptide onto the lipid carrier undecaprenyl phosphate, yielding undecaprenyl-pyrophosphoryl-MurNAc-pentapeptide, known as lipid I. This Salmonella paratyphi A (strain ATCC 9150 / SARB42) protein is Phospho-N-acetylmuramoyl-pentapeptide-transferase.